A 343-amino-acid polypeptide reads, in one-letter code: MRN complex-interacting protein (343 aa).

The tract at residues 75–104 is disordered; it reads EETVSASEEENVGHQQAGNVKQQEKSQPSE. The segment covering 87 to 104 has biased composition (polar residues); that stretch reads GHQQAGNVKQQEKSQPSE. Phosphoserine is present on residues serine 100 and serine 115. 3 disordered regions span residues 128 to 178, 193 to 212, and 230 to 324; these read SKQP…WGPQ, SPCL…RGPG, and AQFV…AQNP. The Nuclear localization signal (NLS) signature appears at 148–151; it reads RKRK. Residues 193 to 202 are compositionally biased toward polar residues; that stretch reads SPCLQENSAD. The interval 213–237 is necessary for the association with the MRN complex; sequence KELWSPIQQVTATSSKWAQFVLPPR. The span at 240–255 shows a compositional bias: basic and acidic residues; that stretch reads SHVDSEQPRSLQRDPR.

It belongs to the MRNIP family. Associates with the MRE11-RAD50-NBN (MRN) damage-sensing complex; this association is constitutive. Interacts with MRE11. Interacts with NBN. Interacts with RAD50. Phosphorylated; phosphorylation is constitutive and occurs in the absence of any DNA-damaging stimulus. Phosphorylation on Ser-115 is necessary for its nuclear retention.

It is found in the nucleus. Its subcellular location is the nucleoplasm. In terms of biological role, plays a role in the cellular response to DNA damage and the maintenance of genome stability through its association with the MRN damage-sensing complex. Promotes chromatin loading and activity of the MRN complex to facilitate subsequent ATM-mediated DNA damage response signaling and DNA repair. The polypeptide is MRN complex-interacting protein (Homo sapiens (Human)).